The sequence spans 21 residues: Hemocyanin subunit 6 (21 aa).

This sequence belongs to the tyrosinase family. Hemocyanin subfamily. As to expression, hemolymph.

The protein localises to the secreted. Its subcellular location is the extracellular space. In terms of biological role, hemocyanins are copper-containing oxygen carriers occurring freely dissolved in the hemolymph of many mollusks and arthropods. The chain is Hemocyanin subunit 6 from Maja squinado (Mediterranean spider crab).